We begin with the raw amino-acid sequence, 231 residues long: Probable intron-encoded endonuclease 1 (231 aa).

The protein belongs to the LAGLIDADG endonuclease family.

The protein localises to the mitochondrion. Endonuclease involved in mitochondrial 21S rRNA gene intron homing. The polypeptide is Probable intron-encoded endonuclease 1 (Wickerhamomyces canadensis (Yeast)).